We begin with the raw amino-acid sequence, 182 residues long: uncharacterized protein (182 aa).

BNR repeat units follow at residues 58-69 and 102-113; these read WISFDAGENWET and YITDDRGESWRA.

This is an uncharacterized protein from Saccharomyces cerevisiae (strain ATCC 204508 / S288c) (Baker's yeast).